The primary structure comprises 475 residues: Ribulose bisphosphate carboxylase large chain (475 aa).

Residues 1–2 (MA) constitute a propeptide that is removed on maturation. Proline 3 carries the N-acetylproline modification. Lysine 14 carries the N6,N6,N6-trimethyllysine modification. Residues asparagine 123 and threonine 173 each contribute to the substrate site. Lysine 175 acts as the Proton acceptor in catalysis. Lysine 177 is a substrate binding site. 3 residues coordinate Mg(2+): lysine 201, aspartate 203, and glutamate 204. Position 201 is an N6-carboxylysine (lysine 201). Histidine 294 serves as the catalytic Proton acceptor. Residues arginine 295, histidine 327, and serine 379 each coordinate substrate.

Belongs to the RuBisCO large chain family. Type I subfamily. As to quaternary structure, heterohexadecamer of 8 large chains and 8 small chains; disulfide-linked. The disulfide link is formed within the large subunit homodimers. Mg(2+) is required as a cofactor. Post-translationally, the disulfide bond which can form in the large chain dimeric partners within the hexadecamer appears to be associated with oxidative stress and protein turnover.

Its subcellular location is the plastid. The protein resides in the chloroplast. The catalysed reaction is 2 (2R)-3-phosphoglycerate + 2 H(+) = D-ribulose 1,5-bisphosphate + CO2 + H2O. It carries out the reaction D-ribulose 1,5-bisphosphate + O2 = 2-phosphoglycolate + (2R)-3-phosphoglycerate + 2 H(+). Its function is as follows. RuBisCO catalyzes two reactions: the carboxylation of D-ribulose 1,5-bisphosphate, the primary event in carbon dioxide fixation, as well as the oxidative fragmentation of the pentose substrate in the photorespiration process. Both reactions occur simultaneously and in competition at the same active site. This is Ribulose bisphosphate carboxylase large chain from Bryopsis maxima (Green alga).